Here is a 312-residue protein sequence, read N- to C-terminus: Ribosomal RNA small subunit methyltransferase H (312 aa).

Residues 35-37, D55, F79, D100, and Q107 contribute to the S-adenosyl-L-methionine site; that span reads GGH.

The protein belongs to the methyltransferase superfamily. RsmH family.

Its subcellular location is the cytoplasm. The catalysed reaction is cytidine(1402) in 16S rRNA + S-adenosyl-L-methionine = N(4)-methylcytidine(1402) in 16S rRNA + S-adenosyl-L-homocysteine + H(+). Specifically methylates the N4 position of cytidine in position 1402 (C1402) of 16S rRNA. The sequence is that of Ribosomal RNA small subunit methyltransferase H from Azoarcus sp. (strain BH72).